We begin with the raw amino-acid sequence, 524 residues long: Putative ribose/galactose/methyl galactoside import ATP-binding protein 1 (524 aa).

ABC transporter domains are found at residues 29-270 (LEMR…VGRT) and 280-524 (VPIG…TGGH). Residue 61–68 (GENGAGKS) coordinates ATP.

It belongs to the ABC transporter superfamily. Carbohydrate importer 2 (CUT2) (TC 3.A.1.2) family.

The protein resides in the cell inner membrane. It carries out the reaction D-ribose(out) + ATP + H2O = D-ribose(in) + ADP + phosphate + H(+). The catalysed reaction is D-galactose(out) + ATP + H2O = D-galactose(in) + ADP + phosphate + H(+). Functionally, part of an ABC transporter complex involved in carbohydrate import. Could be involved in ribose, galactose and/or methyl galactoside import. Responsible for energy coupling to the transport system. The polypeptide is Putative ribose/galactose/methyl galactoside import ATP-binding protein 1 (Rhizobium etli (strain ATCC 51251 / DSM 11541 / JCM 21823 / NBRC 15573 / CFN 42)).